Here is a 1433-residue protein sequence, read N- to C-terminus: Bacillopeptidase F (1433 aa).

The first 30 residues, 1–30 (MRKKTKNRLISSVLSTVVISSLLFPGAAGA), serve as a signal peptide directing secretion. A propeptide spanning residues 31–194 (SSKVTSPSVK…NMKKAQKAIK (164 aa)) is cleaved from the precursor. In terms of domain architecture, Inhibitor I9 spans 68 to 177 (TFLIKFKDLA…KVLPNEKRQL (110 aa)). The Peptidase S8 domain occupies 200-512 (EWNVDQIDAP…HGLVNAFDAV (313 aa)). Active-site charge relay system residues include Asp-227, His-274, and Ser-452. A propeptide spanning residues 756–1433 (SAYKGQNIQV…NGKLNMNTEN (678 aa)) is cleaved from the precursor. The segment at 800-830 (KLGVEKPSGKQKKKPVNPKKAKPSANTAVKH) is disordered. Basic residues predominate over residues 808 to 821 (GKQKKKPVNPKKAK).

The protein belongs to the peptidase S8 family.

It localises to the secreted. In Bacillus subtilis (strain 168), this protein is Bacillopeptidase F (bpr).